The primary structure comprises 325 residues: Glutarate 2-hydroxylase (325 aa).

3 residues coordinate Fe cation: His-160, Asp-162, and His-292.

The protein belongs to the glutarate hydroxylase family. In terms of assembly, homotetramer. Fe(2+) serves as cofactor.

The catalysed reaction is glutarate + 2-oxoglutarate + O2 = (S)-2-hydroxyglutarate + succinate + CO2. It functions in the pathway amino-acid degradation. Its function is as follows. Acts as an alpha-ketoglutarate-dependent dioxygenase catalyzing hydroxylation of glutarate (GA) to L-2-hydroxyglutarate (L2HG). Functions in a L-lysine degradation pathway that proceeds via cadaverine, glutarate and L-2-hydroxyglutarate. Is extremely specific for glutarate, but it can use both 2-oxoglutarate and 2-oxoadipate (2OA) as a cosubstrate for L2HG formation. This is Glutarate 2-hydroxylase from Pseudomonas putida (strain ATCC 47054 / DSM 6125 / CFBP 8728 / NCIMB 11950 / KT2440).